Reading from the N-terminus, the 207-residue chain is ATP synthase subunit a (207 aa).

The next 6 helical transmembrane spans lie at 3–23 (QHVI…TIFA), 62–82 (LIAS…IPGL), 88–108 (NLNT…FEGI), 119–139 (FLGP…LSHL), 158–178 (LISV…VMLI), and 180–200 (LIAV…YIAG).

Belongs to the ATPase A chain family. F-type ATPases have 2 components, CF(1) - the catalytic core - and CF(0) - the membrane proton channel. CF(1) has five subunits: alpha(3), beta(3), gamma(1), delta(1), epsilon(1). CF(0) has three main subunits: a(1), b(2) and c(9-12). The alpha and beta chains form an alternating ring which encloses part of the gamma chain. CF(1) is attached to CF(0) by a central stalk formed by the gamma and epsilon chains, while a peripheral stalk is formed by the delta and b chains.

The protein localises to the cell inner membrane. Its function is as follows. Key component of the proton channel; it plays a direct role in the translocation of protons across the membrane. The polypeptide is ATP synthase subunit a (Sulfurihydrogenibium sp. (strain YO3AOP1)).